The following is a 282-amino-acid chain: Pantothenate synthetase (282 aa).

33 to 40 serves as a coordination point for ATP; it reads MGALHAGH. His40 serves as the catalytic Proton donor. Position 64 (Gln64) interacts with (R)-pantoate. Gln64 is a beta-alanine binding site. 150–153 is an ATP binding site; that stretch reads GEKD. Gln156 lines the (R)-pantoate pocket. Residues Val179 and 187-190 contribute to the ATP site; that span reads LSSR.

The protein belongs to the pantothenate synthetase family. As to quaternary structure, homodimer.

Its subcellular location is the cytoplasm. It catalyses the reaction (R)-pantoate + beta-alanine + ATP = (R)-pantothenate + AMP + diphosphate + H(+). It participates in cofactor biosynthesis; (R)-pantothenate biosynthesis; (R)-pantothenate from (R)-pantoate and beta-alanine: step 1/1. Its function is as follows. Catalyzes the condensation of pantoate with beta-alanine in an ATP-dependent reaction via a pantoyl-adenylate intermediate. The protein is Pantothenate synthetase of Rhodospirillum rubrum (strain ATCC 11170 / ATH 1.1.1 / DSM 467 / LMG 4362 / NCIMB 8255 / S1).